A 371-amino-acid chain; its full sequence is Carnitine monooxygenase oxygenase subunit (371 aa).

Residues 44-152 (WICVAHSSEL…VEEYAGFLFI (109 aa)) form the Rieske domain. Residues C86, H88, C106, and H109 each contribute to the [2Fe-2S] cluster site. Fe cation-binding residues include H208, H213, and D323.

This sequence belongs to the bacterial ring-hydroxylating dioxygenase alpha subunit family. CntA subfamily. In terms of assembly, composed of an oxygenase subunit (cntA) and a reductase subunit (cntB). It depends on [2Fe-2S] cluster as a cofactor. Fe cation is required as a cofactor.

The catalysed reaction is (R)-carnitine + NADH + O2 + H(+) = (3R)-3-hydroxy-4-oxobutanoate + trimethylamine + NAD(+) + H2O. The enzyme catalyses (R)-carnitine + NADPH + O2 + H(+) = (3R)-3-hydroxy-4-oxobutanoate + trimethylamine + NADP(+) + H2O. Its pathway is amine and polyamine metabolism; carnitine metabolism. Its function is as follows. Converts carnitine to trimethylamine and malic semialdehyde. This chain is Carnitine monooxygenase oxygenase subunit, found in Acinetobacter baumannii (strain ATCC 19606 / DSM 30007 / JCM 6841 / CCUG 19606 / CIP 70.34 / NBRC 109757 / NCIMB 12457 / NCTC 12156 / 81).